A 126-amino-acid polypeptide reads, in one-letter code: MKWTFILAVAAGGALGSVARYLVGIGFGKWLGPKFPWGTLFINVTGSLLIGIFAGLFAVRWSLPQAARIFLVVGICGGYTTFSTFSLDTFYLIERGEMASAAAYMIGSVVLSVGALIAGIQIVRVI.

The next 4 membrane-spanning stretches (helical) occupy residues 5 to 25 (FILA…LVGI), 39 to 59 (TLFI…LFAV), 69 to 89 (IFLV…SLDT), and 103 to 123 (AYMI…IQIV). 2 residues coordinate Na(+): G77 and T80.

Belongs to the fluoride channel Fluc/FEX (TC 1.A.43) family.

The protein resides in the cell inner membrane. The enzyme catalyses fluoride(in) = fluoride(out). With respect to regulation, na(+) is not transported, but it plays an essential structural role and its presence is essential for fluoride channel function. Fluoride-specific ion channel. Important for reducing fluoride concentration in the cell, thus reducing its toxicity. The chain is Fluoride-specific ion channel FluC from Nitrobacter winogradskyi (strain ATCC 25391 / DSM 10237 / CIP 104748 / NCIMB 11846 / Nb-255).